A 445-amino-acid chain; its full sequence is Cryptochrome DASH (445 aa).

The 134-residue stretch at 4–137 (KIGLYWFTFD…VIVQHSVRSL (134 aa)) folds into the Photolyase/cryptochrome alpha/beta domain.

It belongs to the DNA photolyase class-1 family. The cofactor is FAD. It depends on (6R)-5,10-methylene-5,6,7,8-tetrahydrofolate as a cofactor.

Its function is as follows. May have a photoreceptor function. Binds DNA; probably functions as a transcriptional repressor. The chain is Cryptochrome DASH (cry) from Vibrio parahaemolyticus serotype O3:K6 (strain RIMD 2210633).